The primary structure comprises 54 residues: Small ribosomal subunit protein uS14 (54 aa).

The Zn(2+) site is built by C19, C22, C37, and C40.

It belongs to the universal ribosomal protein uS14 family. Zinc-binding uS14 subfamily. In terms of assembly, part of the 30S ribosomal subunit. The cofactor is Zn(2+).

Binds 16S rRNA, required for the assembly of 30S particles. The protein is Small ribosomal subunit protein uS14 of Sulfurisphaera tokodaii (strain DSM 16993 / JCM 10545 / NBRC 100140 / 7) (Sulfolobus tokodaii).